The chain runs to 132 residues: MSKSLNIIWQYIRAFVLIYACLYAGIFIASLLPITIPGSIIGMLILFVLLALQILPAKWVNPGCYVLIRYMALLFVPIGVGVMQYFDLLRAQFGPVVVSCAISTLVVFVVVSWSSHLIHGERNVVGQKGSKK.

The next 4 helical transmembrane spans lie at 7–27 (IIWQYIRAFVLIYACLYAGIF), 31–51 (LLPITIPGSIIGMLILFVLLA), 63–83 (GCYVLIRYMALLFVPIGVGVM), and 93–113 (FGPVVVSCAISTLVVFVVVSW).

Belongs to the UPF0299 family.

The protein resides in the cell inner membrane. The polypeptide is UPF0299 membrane protein YohJ (Salmonella arizonae (strain ATCC BAA-731 / CDC346-86 / RSK2980)).